Reading from the N-terminus, the 380-residue chain is RNA-binding motif protein, Y chromosome, family 9 (380 aa).

Residues 8–86 (GKIFIGGLNI…KRIKVKQARR (79 aa)) form the RRM domain. Disordered stretches follow at residues 82–226 (KQAR…STSR) and 279–358 (HEAP…YSAS). Residues 166 to 178 (RSATSAQTRSNTG) show a composition bias toward polar residues. 2 stretches are compositionally biased toward basic and acidic residues: residues 180-190 (RGREPHRREIS) and 333-351 (IDREYFDREGRQERGHSPK).

Testis-specific.

It is found in the nucleus. Its function is as follows. RNA-binding protein which may be involved in spermatogenesis. May be required for sperm development, possibly by participating in pre-mRNA splicing in the testis. The protein is RNA-binding motif protein, Y chromosome, family 9 of Mus musculus (Mouse).